The chain runs to 447 residues: Argininosuccinate synthase (447 aa).

Residues 17–25 (AFSGGLDTS) and alanine 43 contribute to the ATP site. L-citrulline is bound at residue tyrosine 99. The ATP site is built by glycine 129 and threonine 131. Residues threonine 131, asparagine 135, and aspartate 136 each contribute to the L-aspartate site. Asparagine 135 contacts L-citrulline. Aspartate 136 provides a ligand contact to ATP. L-citrulline contacts are provided by arginine 139 and serine 192. Aspartate 194 provides a ligand contact to ATP. L-citrulline is bound by residues threonine 201, glutamate 203, and glutamate 280.

Belongs to the argininosuccinate synthase family. Type 2 subfamily. In terms of assembly, homotetramer.

It is found in the cytoplasm. The catalysed reaction is L-citrulline + L-aspartate + ATP = 2-(N(omega)-L-arginino)succinate + AMP + diphosphate + H(+). Its pathway is amino-acid biosynthesis; L-arginine biosynthesis; L-arginine from L-ornithine and carbamoyl phosphate: step 2/3. The protein is Argininosuccinate synthase of Klebsiella pneumoniae (strain 342).